We begin with the raw amino-acid sequence, 352 residues long: Chymopapain (352 aa).

The first 18 residues, 1 to 18 (MATMSSISKIIFLATCLI), serve as a signal peptide directing secretion. Residues 19 to 134 (IHMGLSSADF…EDFTYKHVTN (116 aa)) constitute a propeptide, activation peptide. Residue asparagine 86 is glycosylated (N-linked (GlcNAc...) asparagine). Cystine bridges form between cysteine 156–cysteine 197, cysteine 190–cysteine 229, and cysteine 287–cysteine 338. The active site involves cysteine 159. Residues histidine 293 and asparagine 313 contribute to the active site.

The protein belongs to the peptidase C1 family.

The enzyme catalyses Specificity similar to that of papain.. Its function is as follows. Cysteine proteinase with a high level of diversity in substrate specificity. This Carica papaya (Papaya) protein is Chymopapain.